Consider the following 400-residue polypeptide: Mu-type opioid receptor (400 aa).

Residues 1–68 (MDSSAVPTNA…CPPTGSPSMI (68 aa)) lie on the Extracellular side of the membrane. N-linked (GlcNAc...) asparagine glycans are attached at residues asparagine 9, asparagine 12, asparagine 33, asparagine 40, and asparagine 48. Residues 69-93 (TAITIMALYSIVCVVGLFGNFLVMY) traverse the membrane as a helical segment. Residues 94 to 106 (VIVRYTKMKTATN) are Cytoplasmic-facing. Residues 107–131 (IYIFNLALADALVTSTLPFQSVNYL) form a helical membrane-spanning segment. Over 132–142 (MGTWPFGTILC) the chain is Extracellular. Residues cysteine 142 and cysteine 219 are joined by a disulfide bond. A helical transmembrane segment spans residues 143–165 (KIVISIDYYNMSTSIFTLCTMSV). Over 166-185 (DRYIAVCHPVKALDFRTPRN) the chain is Cytoplasmic. Tyrosine 168 is modified (phosphotyrosine). A helical membrane pass occupies residues 186–207 (AKIINVCNWILSSAIGLPVMFM). At 208 to 230 (ATTKYRQGSIDCTLTFSHPSWYW) the chain is on the extracellular side. Residues 231–255 (ENLLKICVFIFAFIMPVLIITVCYG) traverse the membrane as a helical segment. The Cytoplasmic segment spans residues 256–283 (LMILRLKSVRMLSGSKEKDRNLRRITRM). A helical transmembrane segment spans residues 284-306 (VLVVVAVFIICWTPIHIYVIIKA). Over 307–314 (LVTIPETT) the chain is Extracellular. A helical transmembrane segment spans residues 315-338 (FQTVSWHFCIALGYTNSCLNPVLY). Residues 334-338 (NPVLY) carry the NPxxY; plays a role in stabilizing the activated conformation of the receptor motif. Residues 339 to 400 (AFLDEDFKRC…NLEAETAPLP (62 aa)) are Cytoplasmic-facing. Cysteine 353 carries the S-palmitoyl cysteine lipid modification. The disordered stretch occupies residues 364–386 (NSTRIRQNTRDHPSTANTVDRTN). Phosphoserine is present on serine 365. Threonine 372 carries the phosphothreonine modification. Serine 377 bears the Phosphoserine mark. At threonine 396 the chain carries Phosphothreonine.

It belongs to the G-protein coupled receptor 1 family. Forms homooligomers and heterooligomers with other GPCRs, such as OPRD1, OPRK1, OPRL1, NPFFR2, ADRA2A, SSTR2, CNR1 and CCR5 (probably in dimeric forms). Interacts with heterotrimeric G proteins; interaction with a heterotrimeric complex containing GNAI1, GNB1 and GNG2 stabilizes the active conformation of the receptor and increases its affinity for endomorphin-2, the synthetic opioid peptide DAMGO and for morphinan agonists. Interacts with PPL; the interaction disrupts agonist-mediated G-protein activation. Interacts (via C-terminus) with DNAJB4 (via C-terminus). Interacts with calmodulin; the interaction inhibits the constitutive activity of OPRM1; it abolishes basal and attenuates agonist-stimulated G-protein coupling. Interacts with FLNA, PLD2, RANBP9 and WLS and GPM6A. Interacts with RTP4. Interacts with SYP and GNAS. Interacts with RGS9, RGS17, RGS20, RGS4, PPP1R9B and HINT1. Post-translationally, phosphorylated. Differentially phosphorylated in basal and agonist-induced conditions. Agonist-mediated phosphorylation modulates receptor internalization. Phosphorylated by GRK2 in a agonist-dependent manner. Phosphorylation at Tyr-168 requires receptor activation, is dependent on non-receptor protein tyrosine kinase Src and results in a decrease in agonist efficacy by reducing G-protein coupling efficiency. Phosphorylated on tyrosine residues; the phosphorylation is involved in agonist-induced G-protein-independent receptor down-regulation. Phosphorylation at Ser-377 is involved in G-protein-dependent but not beta-arrestin-dependent activation of the ERK pathway. Ubiquitinated. A basal ubiquitination seems not to be related to degradation. Ubiquitination is increased upon formation of OPRM1:OPRD1 oligomers leading to proteasomal degradation; the ubiquitination is diminished by RTP4.

It localises to the cell membrane. Its subcellular location is the cell projection. The protein resides in the axon. It is found in the perikaryon. The protein localises to the dendrite. It localises to the endosome. Its function is as follows. Receptor for endogenous opioids such as beta-endorphin and endomorphin. Receptor for natural and synthetic opioids including morphine, heroin, DAMGO, fentanyl, etorphine, buprenorphin and methadone. Also activated by enkephalin peptides, such as Met-enkephalin or Met-enkephalin-Arg-Phe, with higher affinity for Met-enkephalin-Arg-Phe. Agonist binding to the receptor induces coupling to an inactive GDP-bound heterotrimeric G-protein complex and subsequent exchange of GDP for GTP in the G-protein alpha subunit leading to dissociation of the G-protein complex with the free GTP-bound G-protein alpha and the G-protein beta-gamma dimer activating downstream cellular effectors. The agonist- and cell type-specific activity is predominantly coupled to pertussis toxin-sensitive G(i) and G(o) G alpha proteins, GNAI1, GNAI2, GNAI3 and GNAO1, and to a lesser extent to pertussis toxin-insensitive G alpha proteins GNAZ and GNA15. They mediate an array of downstream cellular responses, including inhibition of adenylate cyclase activity and both N-type and L-type calcium channels, activation of inward rectifying potassium channels, mitogen-activated protein kinase (MAPK), phospholipase C (PLC), phosphoinositide/protein kinase (PKC), phosphoinositide 3-kinase (PI3K) and regulation of NF-kappa-B. Also couples to adenylate cyclase stimulatory G alpha proteins. The selective temporal coupling to G-proteins and subsequent signaling can be regulated by RGSZ proteins, such as RGS9, RGS17 and RGS4. Phosphorylation by members of the GPRK subfamily of Ser/Thr protein kinases and association with beta-arrestins is involved in short-term receptor desensitization. Beta-arrestins associate with the GPRK-phosphorylated receptor and uncouple it from the G-protein thus terminating signal transduction. The phosphorylated receptor is internalized through endocytosis via clathrin-coated pits which involves beta-arrestins. The activation of the ERK pathway occurs either in a G-protein-dependent or a beta-arrestin-dependent manner and is regulated by agonist-specific receptor phosphorylation. Acts as a class A G-protein coupled receptor (GPCR) which dissociates from beta-arrestin at or near the plasma membrane and undergoes rapid recycling. Receptor down-regulation pathways are varying with the agonist and occur dependent or independent of G-protein coupling. Endogenous ligands induce rapid desensitization, endocytosis and recycling. Heterooligomerization with other GPCRs can modulate agonist binding, signaling and trafficking properties. Involved in neurogenesis. The polypeptide is Mu-type opioid receptor (OPRM1) (Macaca mulatta (Rhesus macaque)).